The primary structure comprises 181 residues: Shikimate kinase (181 aa).

ATP is bound at residue 11–16; sequence GAGKSK. Ser-15 provides a ligand contact to Mg(2+). Residues Asp-33, Arg-58, and Gly-80 each coordinate substrate. Residue Arg-128 coordinates ATP. Arg-144 contributes to the substrate binding site.

The protein belongs to the shikimate kinase family. In terms of assembly, monomer. Mg(2+) serves as cofactor.

It localises to the cytoplasm. The catalysed reaction is shikimate + ATP = 3-phosphoshikimate + ADP + H(+). Its pathway is metabolic intermediate biosynthesis; chorismate biosynthesis; chorismate from D-erythrose 4-phosphate and phosphoenolpyruvate: step 5/7. Catalyzes the specific phosphorylation of the 3-hydroxyl group of shikimic acid using ATP as a cosubstrate. In Leptospira biflexa serovar Patoc (strain Patoc 1 / Ames), this protein is Shikimate kinase.